A 203-amino-acid chain; its full sequence is ATP-dependent Clp protease proteolytic subunit 2 (203 aa).

The Nucleophile role is filled by Ser-101. Residue His-126 is part of the active site.

It belongs to the peptidase S14 family. Fourteen ClpP subunits assemble into 2 heptameric rings which stack back to back to give a disk-like structure with a central cavity, resembling the structure of eukaryotic proteasomes.

It is found in the cytoplasm. It catalyses the reaction Hydrolysis of proteins to small peptides in the presence of ATP and magnesium. alpha-casein is the usual test substrate. In the absence of ATP, only oligopeptides shorter than five residues are hydrolyzed (such as succinyl-Leu-Tyr-|-NHMec, and Leu-Tyr-Leu-|-Tyr-Trp, in which cleavage of the -Tyr-|-Leu- and -Tyr-|-Trp bonds also occurs).. In terms of biological role, cleaves peptides in various proteins in a process that requires ATP hydrolysis. Has a chymotrypsin-like activity. Plays a major role in the degradation of misfolded proteins. This is ATP-dependent Clp protease proteolytic subunit 2 from Prochlorococcus marinus (strain MIT 9312).